The chain runs to 233 residues: Glycolipid transfer protein 3 (233 aa).

Aspartate 79, asparagine 83, tryptophan 126, and histidine 165 together coordinate a ganglioside GM3 (d18:1(4E)).

This sequence belongs to the GLTP family.

In terms of biological role, may be involved in glycolipids transfer. The polypeptide is Glycolipid transfer protein 3 (Arabidopsis thaliana (Mouse-ear cress)).